Consider the following 667-residue polypeptide: DNA ligase (667 aa).

Residues 34 to 38 (DQEYD), 83 to 84 (SL), and E114 each bind NAD(+). K116 acts as the N6-AMP-lysine intermediate in catalysis. NAD(+) contacts are provided by R137, E170, K286, and K310. Residues C404, C407, C422, and C427 each coordinate Zn(2+). The BRCT domain maps to 588-667 (HLAQKFENYR…EFQQLLSKED (80 aa)).

The protein belongs to the NAD-dependent DNA ligase family. LigA subfamily. Mg(2+) serves as cofactor. Mn(2+) is required as a cofactor.

It catalyses the reaction NAD(+) + (deoxyribonucleotide)n-3'-hydroxyl + 5'-phospho-(deoxyribonucleotide)m = (deoxyribonucleotide)n+m + AMP + beta-nicotinamide D-nucleotide.. In terms of biological role, DNA ligase that catalyzes the formation of phosphodiester linkages between 5'-phosphoryl and 3'-hydroxyl groups in double-stranded DNA using NAD as a coenzyme and as the energy source for the reaction. It is essential for DNA replication and repair of damaged DNA. This Spiroplasma citri protein is DNA ligase.